The chain runs to 101 residues: MAKSSMKAREAKRAKLVAKFAEKRLALKAIINNPTTSDEDRWDAVLKLQGLPRDSSAARQRNRCSQTGRPHGYLRKFGLSRIKLREATMRGEVPGLRKASW.

This sequence belongs to the universal ribosomal protein uS14 family. In terms of assembly, part of the 30S ribosomal subunit. Contacts proteins S3 and S10.

Its function is as follows. Binds 16S rRNA, required for the assembly of 30S particles and may also be responsible for determining the conformation of the 16S rRNA at the A site. The sequence is that of Small ribosomal subunit protein uS14 from Shewanella sediminis (strain HAW-EB3).